The sequence spans 249 residues: AA9 family lytic polysaccharide monooxygenase cel61B (249 aa).

The N-terminal stretch at 1-19 (MKSCAILAALGCLAGSVLG) is a signal peptide. His-20 contacts Cu(2+). Residue Asn-25 is glycosylated (N-linked (GlcNAc...) asparagine). 2 cysteine pairs are disulfide-bonded: Cys-78-Cys-198 and Cys-120-Cys-124. Residue His-108 participates in Cu(2+) binding. Residues His-184 and Gln-193 each contribute to the O2 site. Residue Tyr-195 coordinates Cu(2+).

The protein belongs to the polysaccharide monooxygenase AA9 family. As to quaternary structure, monomer. Cu(2+) serves as cofactor.

The protein resides in the secreted. It carries out the reaction [(1-&gt;4)-beta-D-glucosyl]n+m + reduced acceptor + O2 = 4-dehydro-beta-D-glucosyl-[(1-&gt;4)-beta-D-glucosyl]n-1 + [(1-&gt;4)-beta-D-glucosyl]m + acceptor + H2O.. Functionally, lytic polysaccharide monooxygenase (LPMO) that depolymerizes crystalline and amorphous polysaccharides via the oxidation of scissile alpha- or beta-(1-4)-glycosidic bonds, yielding C1 or C4 oxidation products. Catalysis by LPMOs requires the reduction of the active-site copper from Cu(II) to Cu(I) by a reducing agent and H(2)O(2) or O(2) as a cosubstrate. In Hypocrea jecorina (strain QM6a) (Trichoderma reesei), this protein is AA9 family lytic polysaccharide monooxygenase cel61B.